The following is a 425-amino-acid chain: Serine--tRNA ligase (425 aa).

An L-serine-binding site is contributed by 230-232; it reads TAE. 261–263 provides a ligand contact to ATP; that stretch reads RSE. Glutamate 284 is a binding site for L-serine. ATP is bound at residue 348 to 351; that stretch reads EISS. An L-serine-binding site is contributed by serine 384.

The protein belongs to the class-II aminoacyl-tRNA synthetase family. Type-1 seryl-tRNA synthetase subfamily. As to quaternary structure, homodimer. The tRNA molecule binds across the dimer.

The protein localises to the cytoplasm. It catalyses the reaction tRNA(Ser) + L-serine + ATP = L-seryl-tRNA(Ser) + AMP + diphosphate + H(+). The enzyme catalyses tRNA(Sec) + L-serine + ATP = L-seryl-tRNA(Sec) + AMP + diphosphate + H(+). Its pathway is aminoacyl-tRNA biosynthesis; selenocysteinyl-tRNA(Sec) biosynthesis; L-seryl-tRNA(Sec) from L-serine and tRNA(Sec): step 1/1. In terms of biological role, catalyzes the attachment of serine to tRNA(Ser). Is also able to aminoacylate tRNA(Sec) with serine, to form the misacylated tRNA L-seryl-tRNA(Sec), which will be further converted into selenocysteinyl-tRNA(Sec). In Streptococcus pyogenes serotype M2 (strain MGAS10270), this protein is Serine--tRNA ligase.